A 118-amino-acid polypeptide reads, in one-letter code: Large ribosomal subunit protein bL20 (118 aa).

It belongs to the bacterial ribosomal protein bL20 family.

Its function is as follows. Binds directly to 23S ribosomal RNA and is necessary for the in vitro assembly process of the 50S ribosomal subunit. It is not involved in the protein synthesizing functions of that subunit. This Pseudomonas syringae pv. syringae (strain B728a) protein is Large ribosomal subunit protein bL20.